We begin with the raw amino-acid sequence, 822 residues long: MQAKSKTESRAEYCTGYSEDVDVIREREYPFLKDTTYLDHAGTTLYPKSLIDSFARDLTSNLFGNPHSRSSSSQLSTQRIDDIRLRALRFFNADPDEFDLVFVANATAAIKLVVDVFRDSSPQGFWYGYFIDAHTSLVGAREIAERGHRCFLTSGEVERWIADLATDQKNFPRLFAYPGQSNLNGRRSPMQWCKKIRDGSSGAGNVYTLLDAASLVSTSPLDLSDASAAPDFTALSFYKIFGFPDLGALIVRKSAAGIIKKRKFFGGGTVDMVLAQGMPWHAKKSTIHECLEDGTLPFHNIIALDSALSTHGRLFGSMSNVSFHTRYLAKRLHNRLAAMTHFNGQKVCHLYMSPESDFDNSTQGPIIAFNIRNSSGAWIGKSEVERLANVKKIHIRSGSHCNSGGTATSLGWTGPELLRNFSAGLRCGDDHDVMDGRPTGILRVSLGAVSNLRDIDAFARFIDEFYIEKEPEFVSLVPPMEVVLQEPSFYVESLSVYPIKSCGAFKVPDGQRWEIKREGLAWDREWCLIHQGTGAALSMKKYPRMALIRPVIDLERGVLRITCGSDSKELEVSLRREITNLVTTSLCQSAKSSNVCGDRVVVQAYSSPTVASFFSNFLGVPCTLARFPPQISTRISNPTRSSRRSQRALMPGSFPEDPSPTSEQPPILLSNESPILLISRSSVNRLNENIKYNPRPSYSTPAKAVEADVFRANIVVAENLHQLANAERPYIEDTWESFSVGPEQLCFDVLGSCQRCQMVCVDPYTGTRREEPYSTLVKTRKINSKIVFGRHTSLSNMELSQGAGKPKSCTVMVGDVVTPQIA.

Lys239 is modified (N6-(pyridoxal phosphate)lysine). The active site involves Cys401. A disordered region spans residues 633 to 666 (TRISNPTRSSRRSQRALMPGSFPEDPSPTSEQPP). One can recognise an MOSC domain in the interval 643–820 (RRSQRALMPG…VMVGDVVTPQ (178 aa)).

Belongs to the class-V pyridoxal-phosphate-dependent aminotransferase family. MOCOS subfamily. It depends on pyridoxal 5'-phosphate as a cofactor.

The enzyme catalyses Mo-molybdopterin + L-cysteine + AH2 = thio-Mo-molybdopterin + L-alanine + A + H2O. The protein operates within cofactor biosynthesis; molybdopterin biosynthesis. Functionally, sulfurates the molybdenum cofactor. Sulfation of molybdenum is essential for xanthine dehydrogenase (XDH) and aldehyde oxidase (ADO) enzymes in which molybdenum cofactor is liganded by 1 oxygen and 1 sulfur atom in active form. In Aspergillus oryzae (strain ATCC 42149 / RIB 40) (Yellow koji mold), this protein is Molybdenum cofactor sulfurase.